The chain runs to 955 residues: Anoctamin-4 (955 aa).

The Cytoplasmic portion of the chain corresponds to 1–352 (MEASSSGITN…FGEKIGLYFA (352 aa)). The interval 73–97 (KDDDSLLHPGNLTSTSEDTSRLEAG) is disordered. The chain crosses the membrane as a helical span at residues 353 to 373 (WLGWYTGMLFPAAFIGLFVFL). At 374–424 (YGVTTLDHCQVSKEVCQATDIIMCPVCDKYCPFMRLSDSCVYAKVTHLFDN) the chain is on the extracellular side. A helical membrane pass occupies residues 425 to 445 (GATVFFAVFMAVWATVFLEFW). The Cytoplasmic portion of the chain corresponds to 446–505 (KRRRAVIAYDWDLIDWEEEEEEIRPQFEAKYSKKERMNPISGKPEPYQAFTDKCSRLIVS). Residues 506-526 (ASGIFFMICVVIAAVFGIVIY) form a helical membrane-spanning segment. The Extracellular segment spans residues 527-547 (RVVTVSTFAAFKWALIRNNSQ). N544 is a glycosylation site (N-linked (GlcNAc...) asparagine). The helical transmembrane segment at 548 to 568 (VATTGTAVCINFCIIMLLNVL) threads the bilayer. Residues 569–595 (YEKVALLLTNLEQPRTESEWENSFTLK) lie on the Cytoplasmic side of the membrane. The chain crosses the membrane as a helical span at residues 596 to 616 (MFLFQFVNLNSSTFYIAFFLG). Residues 617–715 (RFTGHPGAYL…AYGLFDEYLE (99 aa)) lie on the Extracellular side of the membrane. Residues 716-736 (MILQFGFTTIFVAAFPLAPLL) traverse the membrane as a helical segment. Residues 737 to 768 (ALLNNIIEIRLDAYKFVTQWRRPLASRAKDIG) are Cytoplasmic-facing. Residues 769–789 (IWYGILEGIGILSVITNAFVI) form a helical membrane-spanning segment. The Extracellular portion of the chain corresponds to 790 to 885 (AITSDFIPRL…QFWHVLAARL (96 aa)). N-linked (GlcNAc...) asparagine glycosylation is found at N824 and N837. The helical transmembrane segment at 886 to 906 (AFIIVFEHLVFCIKHLISYLI) threads the bilayer. Topologically, residues 907–955 (PDLPKDLRDRMRREKYLIQEMMYEAELERLQKERKERKKNGKAHHNEWP) are cytoplasmic.

This sequence belongs to the anoctamin family. As to expression, predominantly expressed in neuronal tissues. Expressed at low levels in ovary, uterus, heart and brain.

It is found in the cell membrane. The enzyme catalyses a 1,2-diacyl-sn-glycero-3-phospho-L-serine(in) = a 1,2-diacyl-sn-glycero-3-phospho-L-serine(out). It catalyses the reaction a beta-D-galactosyl-(1&lt;-&gt;1')-N-acylsphing-4-enine(out) = a beta-D-galactosyl-(1&lt;-&gt;1')-N-acylsphing-4-enine(in). It carries out the reaction a 1,2-diacyl-sn-glycero-3-phosphocholine(in) = a 1,2-diacyl-sn-glycero-3-phosphocholine(out). In terms of biological role, has calcium-dependent phospholipid scramblase activity; scrambles phosphatidylserine, phosphatidylcholine and galactosylceramide. Does not exhibit calcium-activated chloride channel (CaCC) activity. This Mus musculus (Mouse) protein is Anoctamin-4.